A 459-amino-acid chain; its full sequence is U1 small nuclear ribonucleoprotein 70 kDa (459 aa).

The RRM domain maps to 99-178; it reads KTIFVSRISY…RRIVVDIERG (80 aa). The segment at 185–459 is disordered; the sequence is KPRKFGGGLG…YSMISNENGF (275 aa). Basic and acidic residues predominate over residues 211–241; that stretch reads EMSESREKEKEREKEKEKEKERMEKMKKRDG. Over residues 242 to 254 the composition is skewed to low complexity; it reads GLSSNGNRSNGIS. Over residues 263–408 the composition is skewed to basic and acidic residues; it reads DRGDRGDRDR…IDERRRDQRD (146 aa). A compositionally biased stretch (basic residues) spans 426–440; that stretch reads QHHHHQQNHQSHHNQ.

The protein localises to the nucleus. Mediates the splicing of pre-mRNA by binding to the stem loop I region of U1-snRNA. This Dictyostelium discoideum (Social amoeba) protein is U1 small nuclear ribonucleoprotein 70 kDa (snrnp70).